Reading from the N-terminus, the 371-residue chain is Probable L-aspartate decarboxylase (371 aa).

At K232 the chain carries N6-(pyridoxal phosphate)lysine.

Belongs to the group II decarboxylase family. MfnA subfamily. Pyridoxal 5'-phosphate is required as a cofactor.

The catalysed reaction is L-aspartate + H(+) = beta-alanine + CO2. The protein operates within cofactor biosynthesis; coenzyme A biosynthesis. Functionally, catalyzes the decarboxylation of L-aspartate to produce beta-alanine. The chain is Probable L-aspartate decarboxylase from Pyrococcus furiosus (strain ATCC 43587 / DSM 3638 / JCM 8422 / Vc1).